A 490-amino-acid polypeptide reads, in one-letter code: Probable glycine dehydrogenase (decarboxylating) subunit 2 (490 aa).

Lysine 273 is modified (N6-(pyridoxal phosphate)lysine).

The protein belongs to the GcvP family. C-terminal subunit subfamily. The glycine cleavage system is composed of four proteins: P, T, L and H. In this organism, the P 'protein' is a heterodimer of two subunits. Pyridoxal 5'-phosphate is required as a cofactor.

It catalyses the reaction N(6)-[(R)-lipoyl]-L-lysyl-[glycine-cleavage complex H protein] + glycine + H(+) = N(6)-[(R)-S(8)-aminomethyldihydrolipoyl]-L-lysyl-[glycine-cleavage complex H protein] + CO2. Its function is as follows. The glycine cleavage system catalyzes the degradation of glycine. The P protein binds the alpha-amino group of glycine through its pyridoxal phosphate cofactor; CO(2) is released and the remaining methylamine moiety is then transferred to the lipoamide cofactor of the H protein. This Staphylococcus aureus (strain Newman) protein is Probable glycine dehydrogenase (decarboxylating) subunit 2.